The chain runs to 440 residues: Beta-1,3-galactosyl-O-glycosyl-glycoprotein beta-1,6-N-acetylglucosaminyltransferase (440 aa).

The Cytoplasmic portion of the chain corresponds to 1 to 12; sequence MKMAGWKKKLCR. A helical; Signal-anchor for type II membrane protein membrane pass occupies residues 13–30; sequence GHHLWALGCYMLLAVVSL. The Lumenal portion of the chain corresponds to 31-440; the sequence is RLSLRFKCDV…RHKAIYGTEL (410 aa). N-linked (GlcNAc...) asparagine; by host glycosylation is found at Asn72 and Asn108. Disulfide bonds link Cys73-Cys230, Cys164-Cys384, Cys185-Cys212, and Cys393-Cys425.

The protein belongs to the glycosyltransferase 14 family.

The protein resides in the host Golgi apparatus membrane. The catalysed reaction is a 3-O-[beta-D-galactosyl-(1-&gt;3)-N-acetyl-alpha-D-galactosaminyl]-L-seryl-[protein] + UDP-N-acetyl-alpha-D-glucosamine = 3-O-{beta-D-galactosyl-(1-&gt;3)-[N-acetyl-beta-D-glucosaminyl-(1-&gt;6)]-N-acetyl-alpha-D-galactosaminyl}-L-seryl-[protein] + UDP + H(+). It carries out the reaction a 3-O-[beta-D-galactosyl-(1-&gt;3)-N-acetyl-alpha-D-galactosaminyl]-L-threonyl-[protein] + UDP-N-acetyl-alpha-D-glucosamine = a 3-O-{beta-D-galactosyl-(1-&gt;3)-[N-acetyl-beta-D-glucosaminyl-(1-&gt;6)]-N-acetyl-alpha-D-galactosaminyl}-L-threonyl-[protein] + UDP + H(+). It catalyses the reaction a beta-D-Gal-(1-&gt;4)-beta-D-GlcNAc-(1-&gt;3)-beta-D-Gal-(1-&gt;4)-beta-D-GlcNAc derivative + UDP-N-acetyl-alpha-D-glucosamine = a beta-D-Gal-(1-&gt;4)-beta-D-GlcNAc-(1-&gt;3)-[beta-D-GlcNAc-(1-&gt;6)]-beta-D-Gal-(1-&gt;4)-N-acetyl-beta-D-glucosaminyl derivative + UDP + H(+). The enzyme catalyses 3-O-[N-acetyl-beta-D-glucosaminyl-(1-&gt;3)-N-acetyl-alpha-D-galactosaminyl]-L-seryl-[protein] + UDP-N-acetyl-alpha-D-glucosamine = 3-O-[N-acetyl-beta-D-glucosaminyl-(1-&gt;3)-[N-acetyl-beta-D-glucosaminyl-(1-&gt;6)]-N-acetyl-alpha-D-galactosaminyl]-L-seryl-[protein] + UDP + H(+). The catalysed reaction is a 3-O-[N-acetyl-beta-D-glucosaminyl-(1-&gt;3)-N-acetyl-alpha-D-galactosaminyl]-L-threonyl-[protein] + UDP-N-acetyl-alpha-D-glucosamine = 3-O-[N-acetyl-beta-D-glucosaminyl-(1-&gt;3)-[N-acetyl-beta-D-glucosaminyl-(1-&gt;6)]-N-acetyl-alpha-D-galactosaminyl]-L-threonyl-[protein] + UDP + H(+). The protein operates within protein modification; protein glycosylation. Its function is as follows. Non-essential glycosyltransferase that can synthesize all known mucin beta 6 N-acetylglucosaminides. Mediates core 2 and core 4 O-glycan branching, 2 important steps in mucin-type biosynthesis. Has also I-branching enzyme activity by converting linear into branched poly-N-acetyllactosaminoglycans. Contributes to the post-translational modifications of structural proteins. The polypeptide is Beta-1,3-galactosyl-O-glycosyl-glycoprotein beta-1,6-N-acetylglucosaminyltransferase (Bo17) (Bos taurus (Bovine)).